The primary structure comprises 421 residues: 3-isopropylmalate dehydratase large subunit (421 aa).

Positions 302, 362, and 365 each coordinate [4Fe-4S] cluster.

The protein belongs to the aconitase/IPM isomerase family. LeuC type 2 subfamily. Heterodimer of LeuC and LeuD. The cofactor is [4Fe-4S] cluster.

The enzyme catalyses (2R,3S)-3-isopropylmalate = (2S)-2-isopropylmalate. It participates in amino-acid biosynthesis; L-leucine biosynthesis; L-leucine from 3-methyl-2-oxobutanoate: step 2/4. Catalyzes the isomerization between 2-isopropylmalate and 3-isopropylmalate, via the formation of 2-isopropylmaleate. The protein is 3-isopropylmalate dehydratase large subunit of Nitratiruptor sp. (strain SB155-2).